The following is a 372-amino-acid chain: Cytochrome b (372 aa).

4 consecutive transmembrane segments (helical) span residues 29–49, 73–95, 108–128, and 174–194; these read FGSM…ILSW, WFIR…LHIL, VWYS…LGYV, and FFSF…IHLI. Heme b-binding residues include His-79 and His-93. The heme b site is built by His-178 and His-192. His-197 lines the a ubiquinone pocket. The next 4 membrane-spanning stretches (helical) occupy residues 220-240, 284-301, 311-336, and 344-363; these read FSLK…FCIF, LGGV…VFLG, MVKT…IMGG, and DILG…IMLL.

The protein belongs to the cytochrome b family. As to quaternary structure, the main subunits of complex b-c1 are: cytochrome b, cytochrome c1 and the Rieske protein. Requires heme b as cofactor.

The protein localises to the mitochondrion inner membrane. In terms of biological role, component of the ubiquinol-cytochrome c reductase complex (complex III or cytochrome b-c1 complex) that is part of the mitochondrial respiratory chain. The b-c1 complex mediates electron transfer from ubiquinol to cytochrome c. Contributes to the generation of a proton gradient across the mitochondrial membrane that is then used for ATP synthesis. The protein is Cytochrome b (mt:Cyt-b) of Leptorhynchoides thecatus (Thorny-headed worm).